The chain runs to 495 residues: UDP-N-acetylmuramoyl-L-alanyl-D-glutamate--2,6-diaminopimelate ligase (495 aa).

A UDP-N-acetyl-alpha-D-muramoyl-L-alanyl-D-glutamate-binding site is contributed by S29. 111–117 (GTNGKTS) is a binding site for ATP. UDP-N-acetyl-alpha-D-muramoyl-L-alanyl-D-glutamate-binding positions include 153-154 (TT), S180, Q186, and R188. N6-carboxylysine is present on K220. Meso-2,6-diaminopimelate is bound by residues R384, 408–411 (DNPR), G459, and E463. The short motif at 408–411 (DNPR) is the Meso-diaminopimelate recognition motif element.

The protein belongs to the MurCDEF family. MurE subfamily. The cofactor is Mg(2+). In terms of processing, carboxylation is probably crucial for Mg(2+) binding and, consequently, for the gamma-phosphate positioning of ATP.

The protein resides in the cytoplasm. It carries out the reaction UDP-N-acetyl-alpha-D-muramoyl-L-alanyl-D-glutamate + meso-2,6-diaminopimelate + ATP = UDP-N-acetyl-alpha-D-muramoyl-L-alanyl-gamma-D-glutamyl-meso-2,6-diaminopimelate + ADP + phosphate + H(+). The protein operates within cell wall biogenesis; peptidoglycan biosynthesis. Its function is as follows. Catalyzes the addition of meso-diaminopimelic acid to the nucleotide precursor UDP-N-acetylmuramoyl-L-alanyl-D-glutamate (UMAG) in the biosynthesis of bacterial cell-wall peptidoglycan. This chain is UDP-N-acetylmuramoyl-L-alanyl-D-glutamate--2,6-diaminopimelate ligase, found in Xanthomonas oryzae pv. oryzae (strain MAFF 311018).